The sequence spans 213 residues: tRNA (guanine-N(7)-)-methyltransferase (213 aa).

4 residues coordinate S-adenosyl-L-methionine: glutamate 44, aspartate 69, aspartate 96, and aspartate 118. Aspartate 118 is a catalytic residue. Substrate is bound at residue lysine 122. The interval 124–129 is interaction with RNA; the sequence is RHEKRR. Residues aspartate 154 and 191 to 194 each bind substrate; that span reads TEYE.

Belongs to the class I-like SAM-binding methyltransferase superfamily. TrmB family.

The catalysed reaction is guanosine(46) in tRNA + S-adenosyl-L-methionine = N(7)-methylguanosine(46) in tRNA + S-adenosyl-L-homocysteine. It participates in tRNA modification; N(7)-methylguanine-tRNA biosynthesis. In terms of biological role, catalyzes the formation of N(7)-methylguanine at position 46 (m7G46) in tRNA. This is tRNA (guanine-N(7)-)-methyltransferase from Streptococcus thermophilus (strain CNRZ 1066).